Consider the following 358-residue polypeptide: Neutral protease 2 homolog PABG_02362 (358 aa).

Residues 1–19 (MRRVSGILAVAAFTISAFA) form the signal peptide. A propeptide spanning residues 20 to 182 (GVIQPVAKDA…FAAMNQFVKI (163 aa)) is cleaved from the precursor. Disulfide bonds link C188–C259 and C266–C284. N249 carries N-linked (GlcNAc...) asparagine glycosylation. H309 lines the Zn(2+) pocket. The active site involves E310. H313 and D324 together coordinate Zn(2+).

Belongs to the peptidase M35 family. The cofactor is Zn(2+).

Its subcellular location is the secreted. It carries out the reaction Preferential cleavage of bonds with hydrophobic residues in P1'. Also 3-Asn-|-Gln-4 and 8-Gly-|-Ser-9 bonds in insulin B chain.. Its function is as follows. Secreted metalloproteinase that allows assimilation of proteinaceous substrates. Shows high activities on basic nuclear substrates such as histone and protamine. The sequence is that of Neutral protease 2 homolog PABG_02362 from Paracoccidioides brasiliensis (strain Pb03).